Reading from the N-terminus, the 509-residue chain is MQSWSRVYCSLAKRGHFNRISHGLQGLSAVPLRTYADQLIDADVTVIGSGPGGYVAAIKAAQLGFKTVCVEKNETLGGTCLNVGCIPSKALLNNSHYYHMAHGKDFASRGIEMSEVRLNLDKMMEQKSTAVKALTGGIAHLFKQNKVIHVNGYGKITGKNQVTATKVDGGTQVVDTKNILIATGSEVTPFPGITIDEDTIVSSTGALSLKKVPEKMVVIGAGVIGVELGSVWQRLGADVTAVEFLGHVGGIGIDMEISKNFQRILQKQGFKFKLNTKVTGATKKSDGKIDVSIEAASGGKAEVITCDVLLVCIGRRPFTKNLGLEELGIELDPRGRIPVNTRFQTKIPNIYAIGDVVAGPMLAHKAEDEGIICVEGMAGGAVHIDYNCVPSVIYTHPEVAWVGKSEEQLKEEGIEYKVGKFPFAANSRAKTNADTDGMVKILGQKSTDRVLGAHILGPGAGEMVNEAALALEYGASCEDIARVCHAHPTLSEAFREANLAASFGKSINF.

A mitochondrion-targeting transit peptide spans 1–35 (MQSWSRVYCSLAKRGHFNRISHGLQGLSAVPLRTY). Lysine 66 carries the post-translational modification N6-acetyllysine; alternate. Position 66 is an N6-succinyllysine; alternate (lysine 66). FAD-binding positions include 71–80 (EKNETLGGTC) and lysine 89. A disulfide bridge links cysteine 80 with cysteine 85. N6-acetyllysine; alternate is present on residues lysine 104, lysine 122, lysine 132, and lysine 143. An N6-succinyllysine; alternate mark is found at lysine 104, lysine 122, lysine 132, and lysine 143. Glycine 154 contacts FAD. An N6-succinyllysine mark is found at lysine 159 and lysine 166. 183–185 (TGS) provides a ligand contact to FAD. NAD(+) contacts are provided by residues 220–227 (GAGVIGVE) and glutamate 243. Lysine 273 and lysine 277 each carry N6-succinyllysine. An NAD(+)-binding site is contributed by valine 278. Residues serine 285 and serine 297 each carry the phosphoserine modification. Residue glycine 314 coordinates NAD(+). Lysine 346 carries the N6-acetyllysine modification. Residues aspartate 355 and 361–364 (MLAH) each bind FAD. Residue lysine 410 is modified to N6-acetyllysine; alternate. N6-succinyllysine; alternate is present on lysine 410. N6-acetyllysine is present on residues lysine 417 and lysine 420. Lysine 430 carries the post-translational modification N6-succinyllysine. The active-site Proton acceptor is the histidine 487. Serine 502 carries the phosphoserine modification. An N6-acetyllysine; alternate modification is found at lysine 505. The residue at position 505 (lysine 505) is an N6-succinyllysine; alternate.

It belongs to the class-I pyridine nucleotide-disulfide oxidoreductase family. Homodimer. Part of the multimeric pyruvate dehydrogenase complex that contains multiple copies of pyruvate dehydrogenase (subunits PDHA (PDHA1 or PDHA2) and PDHB, E1), dihydrolipoamide acetyltransferase (DLAT, E2) and lipoamide dehydrogenase (DLD, E3). These subunits are bound to an inner core composed of about 48 DLAT and 12 PDHX molecules (by non covalent bonds). The 2-oxoglutarate dehydrogenase complex is composed of OGDH (2-oxoglutarate dehydrogenase; E1), DLST (dihydrolipoamide succinyltransferase; E2), DLD (dihydrolipoamide dehydrogenase; E3) and the assembly factor KGD4. It contains multiple copies of the three enzymatic components (E1, E2 and E3). In the nucleus, the 2-oxoglutarate dehydrogenase complex associates with KAT2A. Interacts with PDHX. FAD is required as a cofactor. Tyrosine phosphorylated.

It localises to the mitochondrion matrix. The protein resides in the nucleus. The protein localises to the cell projection. Its subcellular location is the cilium. It is found in the flagellum. It localises to the cytoplasmic vesicle. The protein resides in the secretory vesicle. The protein localises to the acrosome. The enzyme catalyses N(6)-[(R)-dihydrolipoyl]-L-lysyl-[protein] + NAD(+) = N(6)-[(R)-lipoyl]-L-lysyl-[protein] + NADH + H(+). Functionally, lipoamide dehydrogenase is a component of the glycine cleavage system as well as an E3 component of three alpha-ketoacid dehydrogenase complexes (pyruvate-, alpha-ketoglutarate-, and branched-chain amino acid-dehydrogenase complex). The 2-oxoglutarate dehydrogenase complex is mainly active in the mitochondrion. A fraction of the 2-oxoglutarate dehydrogenase complex also localizes in the nucleus and is required for lysine succinylation of histones: associates with KAT2A on chromatin and provides succinyl-CoA to histone succinyltransferase KAT2A. In monomeric form may have additional moonlighting function as serine protease. Involved in the hyperactivation of spermatazoa during capacitation and in the spermatazoal acrosome reaction. This is Dihydrolipoyl dehydrogenase, mitochondrial (DLD) from Macaca fascicularis (Crab-eating macaque).